Here is an 86-residue protein sequence, read N- to C-terminus: Kappa-theraphotoxin-Cg1a 4 (86 aa).

Positions 1 to 21 are cleaved as a signal peptide; that stretch reads MKASVLITLAVLGVMFVWASA. Positions 22-50 are excised as a propeptide; the sequence is AELEERGSDQRDSPAWLKSMERIFQSEER. 3 disulfide bridges follow: cysteine 52–cysteine 66, cysteine 59–cysteine 71, and cysteine 65–cysteine 78. Position 84 is a phenylalanine amide (phenylalanine 84).

This sequence belongs to the neurotoxin 10 (Hwtx-1) family. 28 (Jztx-11) subfamily. Expressed by the venom gland.

It is found in the secreted. This toxin acts as a voltage-dependent gating-modifier. It inhibits the sodium conductance (IC(50)=124 nM) and slows the fast inactivation (EC(50)=1180 nM) of Nav1.5/SCN5A. It significantly shifts the activation to more depolarized voltages and decreases the deactivation of Nav1.5 currents upon extreme depolarization, but only slightly affects voltage-dependence of steady-state inactivation. In addition, this toxin causes an approximately five-fold decrease in the rate of recovery from inactivation and an approximately 1.9-fold reduction in the closed-state inactivation rate. This toxin integrates the functions of site 3 toxins (alpha-scorpion toxins) with site 4 toxins (beta-scorpion and spider toxins) by targeting multiple sites on Nav1.5. Also shows inhibition of voltage-gated potassium channels (5 uM completely inhibits Kv2.1/KCNB1, whereas 5 uM moderately inhibits Kv4.2/KCND2 Kv4.1/KCND1 channels). The protein is Kappa-theraphotoxin-Cg1a 4 of Chilobrachys guangxiensis (Chinese earth tiger tarantula).